The sequence spans 748 residues: MAAAPAEQGKGKRVQPPWSPPEGTKHSRLCLYNSLTRNKEIFQPQNGKKVTWYCCGPTVYDASHMGHARSYISFDILRRILRDYFKFDVFYCMNITDIDDKIIKRTRQNYLFEQYRKNKSTPAQLLEDVKTASELFSVKLSETTDPDKRQMLEKIQNAVKSAFDPLQEAVQAKLPAEEISRCHEILLEEAKDLLSDWLDSKFGSQVTDNSIFSELPKFWEGEFHKDMEALNVLPPDVLTRVSEYVPEIVAFVKKIVDNGYGYVSNGSVYFDTVKFGSSEKHSYAKLVPEAVGDQKALQEGEGDLSISADRLCEKHSPNDFALWKSSKPGEPSWDSPWGKGRPGWHIECSAMAGSILGESMDIHGGGFDLRFPHHDNELAQSEAYFENDNWVRYFLHTGHLTIAGCKMSKSLKNFITIKDALQKHTARQLRLAFLMHSWKDTLDYSSNTMESAIQYEKFMNEFFLNVKDILRAPTDVTGQFQKWENQEAELNKNFYDKKAAIHEALCDNVDTRSVLEEMRSLVSQSNSYIAAKKSARQMPNRLLLENISCYLTQMLKIFGAIESDDAIGFPVGGNNQNINIESTVMPYLQVLSEFREGVRQIAREKKVTEVLQLSDALRDDILPELGVRFEDHEGLPTVVKLVDKDTLLKEREEKKKIEEEKKRKKEEAARKKQEQEAAKLAKMKIPPHEMFKSEHDKYSKFDENGFPTHDTEGKELSKGQIKKLKKLYETQEKLYKEYLQMVQNGSAN.

The interval 1 to 25 (MAAAPAEQGKGKRVQPPWSPPEGTK) is disordered. Position 55 (Cys-55) interacts with Zn(2+). An L-cysteine-binding site is contributed by Gly-56. A 'HIGH' region motif is present at residues 57 to 67 (PTVYDASHMGH). Residue Thr-96 participates in L-cysteine binding. The 'KIIK' region signature appears at 101 to 104 (KIIK). Cys-348, His-373, and Glu-377 together coordinate Zn(2+). Position 373 (His-373) interacts with L-cysteine. The 'KMSKS' region motif lies at 406-410 (KMSKS). ATP is bound at residue Lys-409. 2 stretches are compositionally biased toward basic and acidic residues: residues 656-679 (KIEEEKKRKKEEAARKKQEQEAAK) and 686-717 (PPHEMFKSEHDKYSKFDENGFPTHDTEGKELS). Residues 656-719 (KIEEEKKRKK…DTEGKELSKG (64 aa)) form a disordered region.

Belongs to the class-I aminoacyl-tRNA synthetase family. Homodimer. The cofactor is Zn(2+).

The protein resides in the cytoplasm. The enzyme catalyses tRNA(Cys) + L-cysteine + ATP = L-cysteinyl-tRNA(Cys) + AMP + diphosphate. In terms of biological role, catalyzes the ATP-dependent ligation of cysteine to tRNA(Cys). This Gallus gallus (Chicken) protein is Cysteine--tRNA ligase, cytoplasmic (CARS1).